Here is a 346-residue protein sequence, read N- to C-terminus: Probable RNA methyltransferase Pmen_2155 (346 aa).

The active-site Proton acceptor is the Glu91. Positions 94 to 320 (LLPRDGLCIS…TKVRNSAGQD (227 aa)) constitute a Radical SAM core domain. Cys101 and Cys325 form a disulfide bridge. Residues Cys108, Cys112, and Cys115 each coordinate [4Fe-4S] cluster. Residues 153–154 (GE), Ser183, 206–208 (SLH), and Asn282 each bind S-adenosyl-L-methionine. The active-site S-methylcysteine intermediate is Cys325.

It belongs to the radical SAM superfamily. RlmN family. [4Fe-4S] cluster serves as cofactor.

The protein localises to the cytoplasm. This Ectopseudomonas mendocina (strain ymp) (Pseudomonas mendocina) protein is Probable RNA methyltransferase Pmen_2155.